The sequence spans 417 residues: Tryptophan synthase beta chain (417 aa).

Position 99 is an N6-(pyridoxal phosphate)lysine (Lys-99).

It belongs to the TrpB family. In terms of assembly, tetramer of two alpha and two beta chains. Requires pyridoxal 5'-phosphate as cofactor.

The catalysed reaction is (1S,2R)-1-C-(indol-3-yl)glycerol 3-phosphate + L-serine = D-glyceraldehyde 3-phosphate + L-tryptophan + H2O. Its pathway is amino-acid biosynthesis; L-tryptophan biosynthesis; L-tryptophan from chorismate: step 5/5. Its function is as follows. The beta subunit is responsible for the synthesis of L-tryptophan from indole and L-serine. The chain is Tryptophan synthase beta chain (trpB) from Corynebacterium glutamicum (strain ATCC 13032 / DSM 20300 / JCM 1318 / BCRC 11384 / CCUG 27702 / LMG 3730 / NBRC 12168 / NCIMB 10025 / NRRL B-2784 / 534).